We begin with the raw amino-acid sequence, 734 residues long: 1,4-alpha-glucan branching enzyme GlgB (734 aa).

The active-site Nucleophile is the aspartate 413. Catalysis depends on glutamate 466, which acts as the Proton donor.

This sequence belongs to the glycosyl hydrolase 13 family. GlgB subfamily. Monomer.

It catalyses the reaction Transfers a segment of a (1-&gt;4)-alpha-D-glucan chain to a primary hydroxy group in a similar glucan chain.. Its pathway is glycan biosynthesis; glycogen biosynthesis. Functionally, catalyzes the formation of the alpha-1,6-glucosidic linkages in glycogen by scission of a 1,4-alpha-linked oligosaccharide from growing alpha-1,4-glucan chains and the subsequent attachment of the oligosaccharide to the alpha-1,6 position. The chain is 1,4-alpha-glucan branching enzyme GlgB from Nitrosomonas europaea (strain ATCC 19718 / CIP 103999 / KCTC 2705 / NBRC 14298).